Reading from the N-terminus, the 270-residue chain is Putative phosphoenolpyruvate synthase regulatory protein (270 aa).

149 to 156 (GVSRSGKT) provides a ligand contact to ADP.

Belongs to the pyruvate, phosphate/water dikinase regulatory protein family. PSRP subfamily.

The enzyme catalyses [pyruvate, water dikinase] + ADP = [pyruvate, water dikinase]-phosphate + AMP + H(+). It catalyses the reaction [pyruvate, water dikinase]-phosphate + phosphate + H(+) = [pyruvate, water dikinase] + diphosphate. In terms of biological role, bifunctional serine/threonine kinase and phosphorylase involved in the regulation of the phosphoenolpyruvate synthase (PEPS) by catalyzing its phosphorylation/dephosphorylation. The protein is Putative phosphoenolpyruvate synthase regulatory protein of Pseudoalteromonas atlantica (strain T6c / ATCC BAA-1087).